Consider the following 107-residue polypeptide: U1-lycotoxin-Ls1b (107 aa).

The N-terminal stretch at 1 to 20 (MMKVLVVVALLVTHISYSSS) is a signal peptide. A propeptide spanning residues 21 to 41 (EGIDDLEADELLSLMANEQTR) is cleaved from the precursor. Intrachain disulfides connect C44–C59, C51–C68, C58–C86, and C70–C84.

Belongs to the neurotoxin 19 (CSTX) family. 04 (U1-Lctx) subfamily. In terms of tissue distribution, expressed by the venom gland.

The protein resides in the secreted. This Lycosa singoriensis (Wolf spider) protein is U1-lycotoxin-Ls1b.